Reading from the N-terminus, the 211-residue chain is Redox-sensing transcriptional repressor Rex (211 aa).

The segment at residues 17–56 (LYYRFIQNFAQEGMERISSKELSEAMKIDSATIRRDFSYF) is a DNA-binding region (H-T-H motif). Residue 91–96 (GVGNLG) participates in NAD(+) binding.

The protein belongs to the transcriptional regulatory Rex family. In terms of assembly, homodimer.

The protein localises to the cytoplasm. Its function is as follows. Modulates transcription in response to changes in cellular NADH/NAD(+) redox state. The chain is Redox-sensing transcriptional repressor Rex from Lysinibacillus sphaericus (strain C3-41).